An 85-amino-acid polypeptide reads, in one-letter code: uncharacterized protein (85 aa).

This is an uncharacterized protein from Caenorhabditis elegans.